Reading from the N-terminus, the 20-residue chain is Pregnancy-associated glycoprotein 75 (20 aa).

This sequence belongs to the peptidase A1 family. In terms of processing, N-glycosylated. As to expression, expressed in chorionic epithelium (trophectoderm).

It localises to the secreted. The sequence is that of Pregnancy-associated glycoprotein 75 from Bubalus bubalis (Domestic water buffalo).